Reading from the N-terminus, the 361-residue chain is sn-glycerol-3-phosphate import ATP-binding protein UgpC (361 aa).

An ABC transporter domain is found at 4–235 (LSFRNLKKTY…PASTFVAGFI (232 aa)). An ATP-binding site is contributed by 37–44 (GPSGCGKS).

This sequence belongs to the ABC transporter superfamily. sn-glycerol-3-phosphate importer (TC 3.A.1.1.3) family. In terms of assembly, the complex is composed of two ATP-binding proteins (UgpC), two transmembrane proteins (UgpA and UgpE) and a solute-binding protein (UgpB).

The protein localises to the cell inner membrane. The enzyme catalyses sn-glycerol 3-phosphate(out) + ATP + H2O = sn-glycerol 3-phosphate(in) + ADP + phosphate + H(+). Its function is as follows. Part of the ABC transporter complex UgpBAEC involved in sn-glycerol-3-phosphate (G3P) import. Responsible for energy coupling to the transport system. The polypeptide is sn-glycerol-3-phosphate import ATP-binding protein UgpC (Bordetella avium (strain 197N)).